The chain runs to 550 residues: Formin-binding protein 1-like (550 aa).

The F-BAR domain maps to 1–263 (MSWGTELWDQ…AAKSVDERRD (263 aa)). Coiled coils occupy residues 66-258 (FTSC…AKSV) and 334-426 (LEDF…QRSE). The REM-1 domain maps to 339–416 (HLPPEQRRKR…IHKNEAWLSE (78 aa)). Residues 423–432 (QRSERRHSAE) show a composition bias toward basic and acidic residues. A disordered region spans residues 423–467 (QRSERRHSAEANHLVAQGRESPEGSYTEDANQEGRVQPQPHAHPE). Residues 479-540 (PAIGHCKSLY…PTSYIDITLE (62 aa)) form the SH3 domain.

The protein belongs to the FNBP1 family. As to quaternary structure, homodimerizes, the dimers can polymerize end-to-end to form filamentous structures. Interacts with GTP-bound cdc42 and wasl/n-wasp.

It localises to the cytoplasm. The protein resides in the cytoskeleton. Its subcellular location is the cell cortex. The protein localises to the cytoplasmic vesicle. It is found in the cell membrane. Required to coordinate membrane tubulation with reorganization of the actin cytoskeleton during endocytosis. Promotes cdc42-induced actin polymerization by activating the wasl-waspip complex, the predominant form of wasl/n-wasp in cells. Essential for autophagy of intracellular bacterial pathogens. The protein is Formin-binding protein 1-like (fnbp1l) of Xenopus tropicalis (Western clawed frog).